The sequence spans 166 residues: Putative membrane protein 162 (166 aa).

A topological domain (intravirion) is located at residue Met-1. Residues 2 to 22 (YYPAVQVLIGIILVDNFNTEF) traverse the membrane as a helical segment. At 23–166 (LSSEKKNCKT…TIMGIARNIL (144 aa)) the chain is on the virion surface side.

The protein belongs to the asfivirus envelope protein p22 family.

Its subcellular location is the virion membrane. It is found in the host cell membrane. The chain is Putative membrane protein 162 from African swine fever virus (isolate Tick/Malawi/Lil 20-1/1983) (ASFV).